The following is a 153-amino-acid chain: UPF0756 membrane protein lin1603 (153 aa).

4 consecutive transmembrane segments (helical) span residues 6-26, 54-74, 80-100, and 117-137; these read MLFL…SLII, WGVT…QIGF, SFKS…SILA, and LVFG…GPVI.

The protein belongs to the UPF0756 family.

It localises to the cell membrane. The sequence is that of UPF0756 membrane protein lin1603 from Listeria innocua serovar 6a (strain ATCC BAA-680 / CLIP 11262).